The sequence spans 150 residues: Small ribosomal subunit protein uS11z (150 aa).

Phosphoserine is present on Ser19.

This sequence belongs to the universal ribosomal protein uS11 family. In terms of assembly, interacts with AAK6.

Its subcellular location is the cytoplasm. The polypeptide is Small ribosomal subunit protein uS11z (RPS14A) (Arabidopsis thaliana (Mouse-ear cress)).